A 129-amino-acid polypeptide reads, in one-letter code: Transcription antitermination protein NusB (129 aa).

It belongs to the NusB family.

In terms of biological role, involved in transcription antitermination. Required for transcription of ribosomal RNA (rRNA) genes. Binds specifically to the boxA antiterminator sequence of the ribosomal RNA (rrn) operons. The protein is Transcription antitermination protein NusB of Staphylococcus aureus (strain bovine RF122 / ET3-1).